We begin with the raw amino-acid sequence, 204 residues long: Octanoyltransferase (204 aa).

The region spanning 30-204 is the BPL/LPL catalytic domain; the sequence is CETPDEIWLL…QSFINQLTDV (175 aa). Substrate-binding positions include 69-76, 136-138, and 149-151; these read RGGQITYH, SLG, and GIA. The Acyl-thioester intermediate role is filled by Cys167.

Belongs to the LipB family.

The protein localises to the cytoplasm. It carries out the reaction octanoyl-[ACP] + L-lysyl-[protein] = N(6)-octanoyl-L-lysyl-[protein] + holo-[ACP] + H(+). It participates in protein modification; protein lipoylation via endogenous pathway; protein N(6)-(lipoyl)lysine from octanoyl-[acyl-carrier-protein]: step 1/2. In terms of biological role, catalyzes the transfer of endogenously produced octanoic acid from octanoyl-acyl-carrier-protein onto the lipoyl domains of lipoate-dependent enzymes. Lipoyl-ACP can also act as a substrate although octanoyl-ACP is likely to be the physiological substrate. This chain is Octanoyltransferase, found in Nitrosomonas europaea (strain ATCC 19718 / CIP 103999 / KCTC 2705 / NBRC 14298).